The primary structure comprises 117 residues: Large ribosomal subunit protein eL8 (117 aa).

The protein belongs to the eukaryotic ribosomal protein eL8 family. As to quaternary structure, part of the 50S ribosomal subunit. Probably part of the RNase P complex.

It is found in the cytoplasm. Its function is as follows. Multifunctional RNA-binding protein that recognizes the K-turn motif in ribosomal RNA, the RNA component of RNase P, box H/ACA, box C/D and box C'/D' sRNAs. This Methanococcus aeolicus (strain ATCC BAA-1280 / DSM 17508 / OCM 812 / Nankai-3) protein is Large ribosomal subunit protein eL8.